A 422-amino-acid polypeptide reads, in one-letter code: uncharacterized protein (422 aa).

3 disordered regions span residues 1–21, 158–218, and 246–271; these read MRDN…TTYD, TAKS…TEQV, and DFGT…PWLT. Residues 11–21 are compositionally biased toward polar residues; it reads AGSNTQQTTYD. Low complexity predominate over residues 170-199; that stretch reads SKSSNGSSSTSTTQRGGSSNENKVKALQVA. Polar residues-rich tracts occupy residues 205–216 and 250–261; these read GSQGNSGDQGTE and APSSSGSGTQDG. Low complexity predominate over residues 262-271; the sequence is TPTPWTPWLT.

This sequence belongs to the adhesin P1 family.

This is an uncharacterized protein from Mycoplasma pneumoniae (strain ATCC 29342 / M129 / Subtype 1) (Mycoplasmoides pneumoniae).